The chain runs to 691 residues: Pleckstrin homology domain-containing family G member 7 (691 aa).

Disordered regions lie at residues 1 to 48 and 109 to 140; these read MEKT…ISTS and TSEP…LQPV. Residues 313 to 488 form the DH domain; that stretch reads MIFMNTLRYL…EGKVKWLDNF (176 aa). N-linked (GlcNAc...) asparagine glycosylation occurs at Asn395. The PH domain maps to 535-668; it reads HLLYEGKLTL…WMAQITTAIS (134 aa).

This Homo sapiens (Human) protein is Pleckstrin homology domain-containing family G member 7.